Consider the following 206-residue polypeptide: Orotate phosphoribosyltransferase (206 aa).

5-phospho-alpha-D-ribose 1-diphosphate contacts are provided by residues Arg97, Lys98, Lys101, and 125-133 (NDVIASGRS). Residue Arg157 coordinates orotate.

It belongs to the purine/pyrimidine phosphoribosyltransferase family. PyrE subfamily. As to quaternary structure, homodimer. It depends on Mg(2+) as a cofactor.

It catalyses the reaction orotidine 5'-phosphate + diphosphate = orotate + 5-phospho-alpha-D-ribose 1-diphosphate. It functions in the pathway pyrimidine metabolism; UMP biosynthesis via de novo pathway; UMP from orotate: step 1/2. Catalyzes the transfer of a ribosyl phosphate group from 5-phosphoribose 1-diphosphate to orotate, leading to the formation of orotidine monophosphate (OMP). This chain is Orotate phosphoribosyltransferase, found in Chlamydia caviae (strain ATCC VR-813 / DSM 19441 / 03DC25 / GPIC) (Chlamydophila caviae).